The primary structure comprises 137 residues: Large ribosomal subunit protein uL16 (137 aa).

Belongs to the universal ribosomal protein uL16 family. In terms of assembly, part of the 50S ribosomal subunit.

Functionally, binds 23S rRNA and is also seen to make contacts with the A and possibly P site tRNAs. The protein is Large ribosomal subunit protein uL16 of Ruegeria pomeroyi (strain ATCC 700808 / DSM 15171 / DSS-3) (Silicibacter pomeroyi).